The sequence spans 273 residues: Ribosomal RNA small subunit methyltransferase A (273 aa).

Residues Asn-18, Leu-20, Gly-45, Glu-66, Asp-91, and Asn-113 each contribute to the S-adenosyl-L-methionine site.

Belongs to the class I-like SAM-binding methyltransferase superfamily. rRNA adenine N(6)-methyltransferase family. RsmA subfamily.

It localises to the cytoplasm. It catalyses the reaction adenosine(1518)/adenosine(1519) in 16S rRNA + 4 S-adenosyl-L-methionine = N(6)-dimethyladenosine(1518)/N(6)-dimethyladenosine(1519) in 16S rRNA + 4 S-adenosyl-L-homocysteine + 4 H(+). In terms of biological role, specifically dimethylates two adjacent adenosines (A1518 and A1519) in the loop of a conserved hairpin near the 3'-end of 16S rRNA in the 30S particle. May play a critical role in biogenesis of 30S subunits. The sequence is that of Ribosomal RNA small subunit methyltransferase A from Cronobacter sakazakii (strain ATCC BAA-894) (Enterobacter sakazakii).